The sequence spans 308 residues: Malonate utilization transcriptional regulator (308 aa).

The HTH lysR-type domain occupies 9–66 (ITFRKLSVFMMFMAKGNIARTAEAMKLSSVSVHRALHTLEEGVGCPLFVHKGRNLLPL). The H-T-H motif DNA-binding region spans 26–45 (IARTAEAMKLSSVSVHRALH).

Belongs to the LysR transcriptional regulatory family.

Its function is as follows. Transcriptional regulator of the mau genes for malonate utilization. This Klebsiella pneumoniae protein is Malonate utilization transcriptional regulator (mauR).